A 486-amino-acid polypeptide reads, in one-letter code: Chromosomal replication initiator protein DnaA (486 aa).

Residues 1 to 79 (MEKSKNIWSL…GYNNIVIVFT (79 aa)) form a domain I, interacts with DnaA modulators region. The tract at residues 79–141 (TNQPPKTHSN…EEEPTNFKNP (63 aa)) is domain II. A domain III, AAA+ region region spans residues 142–358 (FLKKRYTFEN…AAVTKLKAYI (217 aa)). ATP contacts are provided by G186, G188, K189, and T190. Residues 359–486 (DLDNIEIDIE…TELMNKIKKN (128 aa)) form a domain IV, binds dsDNA region.

The protein belongs to the DnaA family. Oligomerizes as a right-handed, spiral filament on DNA at oriC.

It is found in the cytoplasm. Its function is as follows. Plays an essential role in the initiation and regulation of chromosomal replication. ATP-DnaA binds to the origin of replication (oriC) to initiate formation of the DNA replication initiation complex once per cell cycle. Binds the DnaA box (a 9 base pair repeat at the origin) and separates the double-stranded (ds)DNA. Forms a right-handed helical filament on oriC DNA; dsDNA binds to the exterior of the filament while single-stranded (ss)DNA is stabiized in the filament's interior. The ATP-DnaA-oriC complex binds and stabilizes one strand of the AT-rich DNA unwinding element (DUE), permitting loading of DNA polymerase. After initiation quickly degrades to an ADP-DnaA complex that is not apt for DNA replication. Binds acidic phospholipids. Binds to the bpuR promoter, possibly at 5'-TTTTTAAA-3'. This is Chromosomal replication initiator protein DnaA from Borreliella burgdorferi (strain ATCC 35210 / DSM 4680 / CIP 102532 / B31) (Borrelia burgdorferi).